We begin with the raw amino-acid sequence, 499 residues long: FAD-dependent oxidoreductase domain-containing protein 1 (499 aa).

Residues glutamate 75–leucine 95 form a helical membrane-spanning segment.

The cofactor is FAD.

Its subcellular location is the mitochondrion inner membrane. Required for the assembly of the mitochondrial membrane respiratory chain NADH dehydrogenase (Complex I). Involved in mid-late stages of complex I assembly. The polypeptide is FAD-dependent oxidoreductase domain-containing protein 1 (foxred1) (Xenopus laevis (African clawed frog)).